The sequence spans 157 residues: Protein-export protein SecB (157 aa).

This sequence belongs to the SecB family. Homotetramer, a dimer of dimers. One homotetramer interacts with 1 SecA dimer.

The protein localises to the cytoplasm. Functionally, one of the proteins required for the normal export of preproteins out of the cell cytoplasm. It is a molecular chaperone that binds to a subset of precursor proteins, maintaining them in a translocation-competent state. It also specifically binds to its receptor SecA. This Shewanella frigidimarina (strain NCIMB 400) protein is Protein-export protein SecB.